The following is a 216-amino-acid chain: Ribonuclease HII (216 aa).

One can recognise an RNase H type-2 domain in the interval 33–216 (WPVAGADEAG…RMSFRPFRQV (184 aa)). Residues Asp-39, Glu-40, and Asp-130 each contribute to the a divalent metal cation site.

The protein belongs to the RNase HII family. Mn(2+) serves as cofactor. Mg(2+) is required as a cofactor.

It localises to the cytoplasm. The catalysed reaction is Endonucleolytic cleavage to 5'-phosphomonoester.. In terms of biological role, endonuclease that specifically degrades the RNA of RNA-DNA hybrids. The chain is Ribonuclease HII from Rhizobium meliloti (strain 1021) (Ensifer meliloti).